Reading from the N-terminus, the 346-residue chain is Uricase (346 aa).

The interval 1-23 (MFATPLRQPTNASGARPAVSMDG) is disordered. Residues K39 and T84 each act as charge relay system in the active site. Urate contacts are provided by T84, D85, F208, R225, V273, Q274, and N300. H302 acts as the Charge relay system in catalysis. The Microbody targeting signal motif lies at 344–346 (SHL).

This sequence belongs to the uricase family. As to expression, malpighian tubules.

It localises to the peroxisome. The enzyme catalyses urate + O2 + H2O = 5-hydroxyisourate + H2O2. Its pathway is purine metabolism; urate degradation; (S)-allantoin from urate: step 1/3. Its activity is regulated as follows. Repressed by 20-hydroxyecdysone. In terms of biological role, catalyzes the oxidation of uric acid to 5-hydroxyisourate, which is further processed to form (S)-allantoin. The polypeptide is Uricase (Uro) (Drosophila pseudoobscura pseudoobscura (Fruit fly)).